We begin with the raw amino-acid sequence, 202 residues long: Nucleoid occlusion factor SlmA (202 aa).

Residues 14 to 75 (KERQQQVLEV…ALIERIEQTL (62 aa)) enclose the HTH tetR-type domain. The H-T-H motif DNA-binding region spans 38-57 (TTERLAKAVGVSEGALYRYF).

It belongs to the nucleoid occlusion factor SlmA family. In terms of assembly, homodimer. Interacts with FtsZ.

The protein localises to the cytoplasm. The protein resides in the nucleoid. Required for nucleoid occlusion (NO) phenomenon, which prevents Z-ring formation and cell division over the nucleoid. Acts as a DNA-associated cell division inhibitor that binds simultaneously chromosomal DNA and FtsZ, and disrupts the assembly of FtsZ polymers. SlmA-DNA-binding sequences (SBS) are dispersed on non-Ter regions of the chromosome, preventing FtsZ polymerization at these regions. This is Nucleoid occlusion factor SlmA from Haemophilus ducreyi (strain 35000HP / ATCC 700724).